We begin with the raw amino-acid sequence, 29 residues long: Histone H2B (29 aa).

The segment at 1 to 29 (MPEPAKSAPKKGSTRTAAKGGKKRRKSRK) is disordered. Lys-6 and Lys-11 each carry N6-acetyllysine. Ser-13 is subject to Phosphoserine. The segment covering 20–29 (GGKKRRKSRK) has biased composition (basic residues).

Belongs to the histone H2B family. In terms of assembly, the nucleosome is a histone octamer containing two molecules each of H2A, H2B, H3 and H4 assembled in one H3-H4 heterotetramer and two H2A-H2B heterodimers. The octamer wraps approximately 147 bp of DNA. Monoubiquitination at the C-terminal Lys gives a specific tag for epigenetic transcriptional activation and is also prerequisite for histone H3 'Lys-4' and 'Lys-79' methylation. Post-translationally, phosphorylated during apoptosis; which facilitates apoptotic chromatin condensation.

The protein localises to the nucleus. It is found in the chromosome. Its function is as follows. Core component of nucleosome. Nucleosomes wrap and compact DNA into chromatin, limiting DNA accessibility to the cellular machineries which require DNA as a template. Histones thereby play a central role in transcription regulation, DNA repair, DNA replication and chromosomal stability. DNA accessibility is regulated via a complex set of post-translational modifications of histones, also called histone code, and nucleosome remodeling. In Cyprinus carpio (Common carp), this protein is Histone H2B.